A 1058-amino-acid polypeptide reads, in one-letter code: Carbamoyl phosphate synthase large chain (1058 aa).

The carboxyphosphate synthetic domain stretch occupies residues 1 to 401 (MPKRKDIQKI…SLLKACRSLE (401 aa)). Residues R129, R169, G175, G176, R208, I210, E215, G241, I242, H243, Q284, and E298 each coordinate ATP. Residues 133–327 (KQLMQELDQP…IAKLAAKIAV (195 aa)) form the ATP-grasp 1 domain. Q284, E298, and N300 together coordinate Mg(2+). Mn(2+) is bound by residues Q284, E298, and N300. Positions 402 to 546 (IGVCHNEMTS…YSTYELENES (145 aa)) are oligomerization domain. Residues 547 to 929 (VQSNKESILV…ALYKAFEANN (383 aa)) are carbamoyl phosphate synthetic domain. The ATP-grasp 2 domain maps to 671-861 (EKALKELGIP…MAQIATKLIL (191 aa)). ATP-binding residues include R707, S746, I748, E752, G777, V778, H779, S780, Q820, and E832. Residues Q820, E832, and N834 each contribute to the Mg(2+) site. Residues Q820, E832, and N834 each coordinate Mn(2+). The 129-residue stretch at 930 to 1058 (SHLSEFGQIV…ESRCFNIEAI (129 aa)) folds into the MGS-like domain. The interval 930 to 1058 (SHLSEFGQIV…ESRCFNIEAI (129 aa)) is allosteric domain.

This sequence belongs to the CarB family. Composed of two chains; the small (or glutamine) chain promotes the hydrolysis of glutamine to ammonia, which is used by the large (or ammonia) chain to synthesize carbamoyl phosphate. Tetramer of heterodimers (alpha,beta)4. Mg(2+) is required as a cofactor. It depends on Mn(2+) as a cofactor.

The enzyme catalyses hydrogencarbonate + L-glutamine + 2 ATP + H2O = carbamoyl phosphate + L-glutamate + 2 ADP + phosphate + 2 H(+). It catalyses the reaction hydrogencarbonate + NH4(+) + 2 ATP = carbamoyl phosphate + 2 ADP + phosphate + 2 H(+). Its pathway is amino-acid biosynthesis; L-arginine biosynthesis; carbamoyl phosphate from bicarbonate: step 1/1. It functions in the pathway pyrimidine metabolism; UMP biosynthesis via de novo pathway; (S)-dihydroorotate from bicarbonate: step 1/3. In terms of biological role, large subunit of the glutamine-dependent carbamoyl phosphate synthetase (CPSase). CPSase catalyzes the formation of carbamoyl phosphate from the ammonia moiety of glutamine, carbonate, and phosphate donated by ATP, constituting the first step of 2 biosynthetic pathways, one leading to arginine and/or urea and the other to pyrimidine nucleotides. The large subunit (synthetase) binds the substrates ammonia (free or transferred from glutamine from the small subunit), hydrogencarbonate and ATP and carries out an ATP-coupled ligase reaction, activating hydrogencarbonate by forming carboxy phosphate which reacts with ammonia to form carbamoyl phosphate. The protein is Carbamoyl phosphate synthase large chain of Streptococcus pyogenes serotype M6 (strain ATCC BAA-946 / MGAS10394).